The following is a 591-amino-acid chain: Metalloendopeptidase OPG085 (591 aa).

His41 contributes to the Zn(2+) binding site. The active site involves Glu44. Residues His45 and Glu112 each contribute to the Zn(2+) site.

Belongs to the peptidase M44 family. The cofactor is Zn(2+). In terms of processing, undergoes proteolytic processing during the course of infection. May be cleaved into 46 kDa and 22 kDa products (Potential).

Its subcellular location is the virion. Functionally, probably involved in maturation of some viral proteins by processing them preferentially at Ala-Gly-|-Ser/Thr/Lys motifs. Does not seem to be responsible for the cleavage of major core proteins. The sequence is that of Metalloendopeptidase OPG085 (OPG085) from Homo sapiens (Human).